The sequence spans 395 residues: PVGETTLGRISNVLGEPVDNLGPVQSSTTFPIHRSAPAFTQLDTKLSIFETGIKVVDLSAPYRRGGKIGLFGGAGVGKTVLITESINNIAKAHGGVSVSGGVGERTREGNDLYMEMKESKVINEQNISESKVALVYGQMNEPPGARMRVGSTASTMAEYFRDVNKQDVPPFIDNIFRFVQAGSEVSALLGRMPSAVGYQPTLGTEMGSLQERITSTKEGSITSIQAVYVPADDLTDPAPATTSAHLDATTVLSRGLAAKGIYPAVDPLDSTSTMLQPWIAGEEHYDTAQGVKQTLQRYKELQDIIAIPGLDELSEEDRLTVARARKIERFLSQPFFVAEVFTGSPGKYVSLSETIKGFQMILPGELDNLPEQAFYLVGNIDEATAKAASLQAEVQ.

72–79 (GGAGVGKT) lines the ATP pocket.

The protein belongs to the ATPase alpha/beta chains family. F-type ATPases have 2 components, CF(1) - the catalytic core - and CF(0) - the membrane proton channel. CF(1) has five subunits: alpha(3), beta(3), gamma(1), delta(1), epsilon(1). CF(0) has four main subunits: a(1), b(1), b'(1) and c(9-12).

The protein localises to the plastid. Its subcellular location is the chloroplast thylakoid membrane. It carries out the reaction ATP + H2O + 4 H(+)(in) = ADP + phosphate + 5 H(+)(out). Its function is as follows. Produces ATP from ADP in the presence of a proton gradient across the membrane. The catalytic sites are hosted primarily by the beta subunits. This Blechnum occidentale (Hammock fern) protein is ATP synthase subunit beta, chloroplastic.